Here is a 1770-residue protein sequence, read N- to C-terminus: Vitellogenin (1770 aa).

Residues 1–16 (MLLLLTLLLFAGTVAA) form the signal peptide. In terms of domain architecture, Vitellogenin spans 22–809 (WQVGNEYTYL…SEDSVIPRIL (788 aa)). Cysteine 178 and cysteine 222 are joined by a disulfide. Asparagine 296 carries N-linked (GlcNAc...) asparagine glycosylation. The tract at residues 373–394 (SSSSSISSSEENDFWQPKPTLE) is disordered. The N-linked (GlcNAc...) asparagine glycan is linked to asparagine 1067. The VWFD domain occupies 1442–1635 (TSCMLDKTRA…SYALISNQCE (194 aa)). 2 disulfides stabilise this stretch: cysteine 1444-cysteine 1598 and cysteine 1466-cysteine 1634.

In terms of tissue distribution, accumulates in the hemolymph. Represents up to 70% of the queen's hemolymph proteins. During the first week of the worker adult life, when it becomes a nurse bee and performs brood-rearing tasks, the vitellogenin titer increases and may account for up to 40% of the total hemolymph proteins.

It is found in the secreted. In terms of biological role, precursor of the egg-yolk proteins that are sources of nutrients during embryonic development. Involved in the differentiation of honeybee larvae into queens. The chain is Vitellogenin (Vg) from Apis mellifera (Honeybee).